A 239-amino-acid polypeptide reads, in one-letter code: Ribonuclease PH (239 aa).

Phosphate-binding positions include R87 and 125–127; that span reads GTR.

This sequence belongs to the RNase PH family. In terms of assembly, homohexameric ring arranged as a trimer of dimers.

It carries out the reaction tRNA(n+1) + phosphate = tRNA(n) + a ribonucleoside 5'-diphosphate. Its function is as follows. Phosphorolytic 3'-5' exoribonuclease that plays an important role in tRNA 3'-end maturation. Removes nucleotide residues following the 3'-CCA terminus of tRNAs; can also add nucleotides to the ends of RNA molecules by using nucleoside diphosphates as substrates, but this may not be physiologically important. Probably plays a role in initiation of 16S rRNA degradation (leading to ribosome degradation) during starvation. The sequence is that of Ribonuclease PH from Cyanothece sp. (strain PCC 7425 / ATCC 29141).